Consider the following 318-residue polypeptide: NADH-ubiquinone oxidoreductase chain 1 (318 aa).

A run of 8 helical transmembrane segments spans residues 2-22 (FLTN…FLTL), 70-90 (MFLM…IPLP), 102-122 (LLFM…SGWA), 147-167 (AIIL…TLII), 171-191 (YMWL…STLA), 222-242 (LFFL…TILF), 253-273 (ELYT…FLWI), and 294-314 (LPLT…TAAI).

It belongs to the complex I subunit 1 family.

The protein localises to the mitochondrion inner membrane. It carries out the reaction a ubiquinone + NADH + 5 H(+)(in) = a ubiquinol + NAD(+) + 4 H(+)(out). Its function is as follows. Core subunit of the mitochondrial membrane respiratory chain NADH dehydrogenase (Complex I) that is believed to belong to the minimal assembly required for catalysis. Complex I functions in the transfer of electrons from NADH to the respiratory chain. The immediate electron acceptor for the enzyme is believed to be ubiquinone. This chain is NADH-ubiquinone oxidoreductase chain 1 (MT-ND1), found in Diaemus youngi (White-winged vampire bat).